A 456-amino-acid polypeptide reads, in one-letter code: Probable glycine dehydrogenase (decarboxylating) subunit 1 (456 aa).

It belongs to the GcvP family. N-terminal subunit subfamily. The glycine cleavage system is composed of four proteins: P, T, L and H. In this organism, the P 'protein' is a heterodimer of two subunits.

The enzyme catalyses N(6)-[(R)-lipoyl]-L-lysyl-[glycine-cleavage complex H protein] + glycine + H(+) = N(6)-[(R)-S(8)-aminomethyldihydrolipoyl]-L-lysyl-[glycine-cleavage complex H protein] + CO2. The glycine cleavage system catalyzes the degradation of glycine. The P protein binds the alpha-amino group of glycine through its pyridoxal phosphate cofactor; CO(2) is released and the remaining methylamine moiety is then transferred to the lipoamide cofactor of the H protein. The polypeptide is Probable glycine dehydrogenase (decarboxylating) subunit 1 (Rhizorhabdus wittichii (strain DSM 6014 / CCUG 31198 / JCM 15750 / NBRC 105917 / EY 4224 / RW1) (Sphingomonas wittichii)).